Here is a 179-residue protein sequence, read N- to C-terminus: Tetratricopeptide repeat protein 36 (179 aa).

TPR repeat units lie at residues 43-76 (SSQLEREAVRLAESMNVTDAIEKFTEAIQVCPLN), 77-110 (PSAYNNRAQAYRLQNSPEKALEDLNESLRLAGPK), and 115-148 (CQAYVQRASIYRLQGDDEKARADFAAAAELGSSF).

It belongs to the TTC36 family.

The polypeptide is Tetratricopeptide repeat protein 36 (Caenorhabditis briggsae).